The following is a 435-amino-acid chain: Xylose isomerase (435 aa).

Residues histidine 100 and aspartate 103 contribute to the active site. Mg(2+) contacts are provided by glutamate 231, glutamate 267, histidine 270, aspartate 295, aspartate 306, aspartate 308, and aspartate 338.

This sequence belongs to the xylose isomerase family. Homotetramer. Mg(2+) serves as cofactor.

It is found in the cytoplasm. It catalyses the reaction alpha-D-xylose = alpha-D-xylulofuranose. The polypeptide is Xylose isomerase (Brucella canis (strain ATCC 23365 / NCTC 10854 / RM-666)).